A 166-amino-acid chain; its full sequence is Small ribosomal subunit protein uS5 (166 aa).

Residues 12 to 75 (YIEKLVQVNR…EAARRNMIQV (64 aa)) enclose the S5 DRBM domain.

The protein belongs to the universal ribosomal protein uS5 family. As to quaternary structure, part of the 30S ribosomal subunit. Contacts proteins S4 and S8.

With S4 and S12 plays an important role in translational accuracy. Its function is as follows. Located at the back of the 30S subunit body where it stabilizes the conformation of the head with respect to the body. The protein is Small ribosomal subunit protein uS5 of Pseudomonas aeruginosa (strain LESB58).